Reading from the N-terminus, the 213-residue chain is MKAFTQHNGLVAPLDRANVDTDQIIPKQFLKSIKRTGFGPNLFDEWRYLDVGQPYQDNSKRPLNHDFVLNHERYQGASVLLARENFGCGSSREHAPWALEEYGFCAIIAPSYADIFFNNSFKNGLLPIILSEAEVDELFKQVEASPGYQLSIDLQAQTVTRPDGKVLSFEIDAFRKHCLLNGLDDIGLTLMDADAIASFESRHRASQPWLFRD.

Belongs to the LeuD family. LeuD type 1 subfamily. As to quaternary structure, heterodimer of LeuC and LeuD.

The catalysed reaction is (2R,3S)-3-isopropylmalate = (2S)-2-isopropylmalate. The protein operates within amino-acid biosynthesis; L-leucine biosynthesis; L-leucine from 3-methyl-2-oxobutanoate: step 2/4. Its function is as follows. Catalyzes the isomerization between 2-isopropylmalate and 3-isopropylmalate, via the formation of 2-isopropylmaleate. This chain is 3-isopropylmalate dehydratase small subunit, found in Pseudomonas savastanoi pv. phaseolicola (strain 1448A / Race 6) (Pseudomonas syringae pv. phaseolicola (strain 1448A / Race 6)).